We begin with the raw amino-acid sequence, 249 residues long: Probable phosphatase VV2_1469 (249 aa).

Zn(2+) contacts are provided by H8, H10, H16, H41, E74, H102, H132, D194, and H196.

This sequence belongs to the PHP family. Zn(2+) serves as cofactor.

The polypeptide is Probable phosphatase VV2_1469 (Vibrio vulnificus (strain CMCP6)).